Here is a 580-residue protein sequence, read N- to C-terminus: Multidrug resistance-like ATP-binding protein MdlB (580 aa).

The ABC transmembrane type-1 domain occupies 25 to 310; the sequence is LILAFIFLLS…ITIQQSVLQQ (286 aa). Transmembrane regions (helical) follow at residues 26 to 46, 61 to 81, 150 to 170, 173 to 193, 247 to 267, and 268 to 288; these read ILAF…PILI, LLII…SVFL, IILI…MALV, FILP…TPLL, LDGF…LCNF, and MFLF…YAFI. Residues 341 to 575 form the ABC transporter domain; that stretch reads INIQNVSFYH…KSCYYKMYKF (235 aa). 375–382 is a binding site for ATP; sequence GHTGSGKS.

The protein belongs to the ABC transporter superfamily. Drug exporter-2 (TC 3.A.1.117) family.

It is found in the cell membrane. The enzyme catalyses ATP + H2O + xenobioticSide 1 = ADP + phosphate + xenobioticSide 2.. The protein is Multidrug resistance-like ATP-binding protein MdlB (mdlB) of Buchnera aphidicola subsp. Acyrthosiphon pisum (strain APS) (Acyrthosiphon pisum symbiotic bacterium).